We begin with the raw amino-acid sequence, 478 residues long: MDEKPTTRKGSGFCSLRYALALIMHFSNFTMITQRVSLSIAIIAMVNSTQHQDPANASTEGPVMDLLSNQSRGIKDFSTRAAVYQWSTETQGIIFSSISYGIILTLIPSGYLAGIFGAKQILGAGLLISSLLTLFTPLAADFGVILVIVIRTVQGMAQGMAWTGQFTIWAKWAPPLERSKLTSIAGSGAAFGSFIILCVGGLISQALGWPFIFYIFGSIGCVCCVLWFTVIYDDPMHHPCISVREKEHITSSVAQQSSSPRRSVPIKAMVRCLPLWAIFMGFFSHFWLCTIIITYLPTYISTVLHVNIRDSGVLSSLPFIAASSCTILGGQMADFLLSRNLLSLITVRKLFSSLGLLLPSLCAVALPFVTSSYIATIVLLILIPGTSNLCDSGFIINTLDVAPRYASFLMGISRGFGLTAGIISSTTTGFLISQDSESGWRNVFFLSAAVNMFGLIFYLIFGQAEIQSWAKERTLTRL.

N-linked (GlcNAc...) asparagine glycosylation is found at Asn28, Asn47, Asn56, and Asn69. 10 helical membrane-spanning segments follow: residues 98–118 (ISYG…IFGA), 130–150 (SLLT…VIVI), 183–203 (SIAG…GGLI), 211–231 (FIFY…FTVI), 273–293 (LPLW…TIII), 317–337 (LPFI…DFLL), 341–361 (LLSL…LPSL), 363–383 (AVAL…LILI), 405–425 (YASF…IISS), and 442–462 (NVFF…LIFG).

The protein belongs to the major facilitator superfamily. Sodium/anion cotransporter family. As to expression, expressed in the liver, kidney, placenta, lung and thyroid (at protein level).

The protein localises to the apical cell membrane. It carries out the reaction 3 Na(+)(out) + phosphate(out) = 3 Na(+)(in) + phosphate(in). The catalysed reaction is urate(out) + n chloride(in) = urate(in) + n chloride(out). Acts as a membrane potential-dependent organic anion transporter, the transport requires a low concentration of chloride ions. Mediates chloride-dependent transport of urate. Can actively transport inorganic phosphate into cells via Na(+) cotransport. This Mus musculus (Mouse) protein is Sodium-dependent phosphate transport protein 3 (Slc17a2).